We begin with the raw amino-acid sequence, 322 residues long: MNENKCTDKINNLPKAIFIMGQTAVGKTKIAEILKKKLPVEIISVDSGCIYKGMNIGTDKPNVKKSSSDKYHLIDICEPNDYYSVENFRLDALKIMEKISKKGLIPLLVGGSMFYFKSLLHGLSNLPSYNIENKNLLKKKINEIGWYKSYIFLKKIDPIFASNIHPNDHYRLTRALEIYFSSGNIPTNLFKAKTKKLEYNIRQFSIMISDKKILYKKIKDRFFNMLKNGFKKEVEFLKNKKQINKNMPSMRCIGYKQMLAYLSGEINYKEMILFTISATNKLAKKQSTWLKKWKNINYIYNKDVYISSEEIFNILKKDNFID.

21-28 (GQTAVGKT) contributes to the ATP binding site. 23 to 28 (TAVGKT) contributes to the substrate binding site. Residues 46-49 (DSGC) are interaction with substrate tRNA.

Belongs to the IPP transferase family. As to quaternary structure, monomer. The cofactor is Mg(2+).

It catalyses the reaction adenosine(37) in tRNA + dimethylallyl diphosphate = N(6)-dimethylallyladenosine(37) in tRNA + diphosphate. Functionally, catalyzes the transfer of a dimethylallyl group onto the adenine at position 37 in tRNAs that read codons beginning with uridine, leading to the formation of N6-(dimethylallyl)adenosine (i(6)A). This chain is tRNA dimethylallyltransferase, found in Wigglesworthia glossinidia brevipalpis.